A 206-amino-acid chain; its full sequence is 2,3-bisphosphoglycerate-dependent phosphoglycerate mutase (206 aa).

Residues 9–16 (RHGQSEWN), 22–23 (TG), R61, 88–91 (ERDY), K99, 115–116 (RR), and 159–160 (GN) each bind substrate. Residue H10 is the Tele-phosphohistidine intermediate of the active site. Catalysis depends on E88, which acts as the Proton donor/acceptor.

It belongs to the phosphoglycerate mutase family. BPG-dependent PGAM subfamily. As to quaternary structure, homodimer.

The enzyme catalyses (2R)-2-phosphoglycerate = (2R)-3-phosphoglycerate. The protein operates within carbohydrate degradation; glycolysis; pyruvate from D-glyceraldehyde 3-phosphate: step 3/5. In terms of biological role, catalyzes the interconversion of 2-phosphoglycerate and 3-phosphoglycerate. The chain is 2,3-bisphosphoglycerate-dependent phosphoglycerate mutase from Methylocella silvestris (strain DSM 15510 / CIP 108128 / LMG 27833 / NCIMB 13906 / BL2).